Reading from the N-terminus, the 395-residue chain is THP3 homolog C2A9.11c (395 aa).

Residues 91 to 127 (LLSEEDEVDKKEKRRRRFENGSRSQNNAKSEELKVNP) are disordered. In terms of domain architecture, PCI spans 218–384 (DVGEYNQCQT…STDRFEKCMK (167 aa)).

Belongs to the THP3 family.

Its subcellular location is the cytoplasm. The protein resides in the nucleus. In terms of biological role, required for transcription elongation. May also be involved in pre-mRNA splicing. This Schizosaccharomyces pombe (strain 972 / ATCC 24843) (Fission yeast) protein is THP3 homolog C2A9.11c.